We begin with the raw amino-acid sequence, 252 residues long: MIHLLIVDALNLIRRIHAVQGSPCIPACEHALRQLIQHSHPTHAVAVFDEENRNHSWRHQILPDYKAGRSPMPDNLQQEMPQIRASFEQQGVTCWHAKGHEADDLAATLAVKVTAAGHNVTIVSTDKGYCQLLSPNIRIRDYFQKRWLDMPFVQQEFGVLPEQLPDYWGLAGISSSKIPGIQGIGPKTAATLLQQAGTLDNLFQHLDQQPEKWRNKLESNQEIAFISREVASLRTDLALKGNLQQLRLTIAT.

Asp103 is a Mg(2+) binding site. In terms of domain architecture, 5'-3' exonuclease spans Val159 to Leu248. K(+) contacts are provided by Leu170, Ala171, Pro179, Ile181, and Ile184. The interaction with DNA stretch occupies residues Gly183–Thr188.

The protein belongs to the Xni family. Mg(2+) serves as cofactor. It depends on K(+) as a cofactor.

In terms of biological role, has flap endonuclease activity. During DNA replication, flap endonucleases cleave the 5'-overhanging flap structure that is generated by displacement synthesis when DNA polymerase encounters the 5'-end of a downstream Okazaki fragment. In Photorhabdus laumondii subsp. laumondii (strain DSM 15139 / CIP 105565 / TT01) (Photorhabdus luminescens subsp. laumondii), this protein is Flap endonuclease Xni.